The following is a 308-amino-acid chain: uncharacterized protein (308 aa).

2 stretches are compositionally biased toward polar residues: residues 138–148 (WSFTKHGSNTP) and 205–229 (STSHLNHPSTSNSPDPLYSASQPPS). 2 disordered regions span residues 138–157 (WSFTKHGSNTPSDSSSPLCN) and 205–235 (STSHLNHPSTSNSPDPLYSASQPPSIKTDAS).

The protein localises to the cytoplasm. This is an uncharacterized protein from Schizosaccharomyces pombe (strain 972 / ATCC 24843) (Fission yeast).